Consider the following 708-residue polypeptide: MTMDEQQSQAVAPVYVGGFLARYDQSPDEAELLLPRDVVEHWLHAQGQGQPSLSVALPLNINHDDTAVVGHVAAMQSVRDGLFCLGCVTSPRFLEIVRRASEKSELVSRGPVSPLQPDKVVEFLSGSYAGLSLSSRRCDDVEAATSLSGSETTPFKHVALCSVGRRRGTLAVYGRDPEWVTQRFPDLTAADRDGLRAQWQRCGSTAVDASGDPFRSDSYGLLGNSVDALYIRERLPKLRYDKQLVGVTERESYVKASVSPEAACVIKAASAERSGDSRSQAATPAAGARVPSSSPSPPVEPPSPVQPPALPASPSVLPAESPPSLSPSEPAEAASMSHPLSAAVPAATAPPGATVAGASPAVSSLAWPHDGVYLPKDAFFSLLGASRSAAPVMYPGAVAAPPSASPAPLPLPSYPASYGAPVVGYDQLAARHFADYVDPHYPGWGRRYEPAPSLHPSYPVPPPPSPAYYRRRDSPGGMDEPPSGWERYDGGHRGQSQKQHRHGGSGGHNKRRKETAAASSSSSDEDLSFPGEAEHGRARKRLKSHVNSDGGSGGHAGSNQQQQQRYDELRDAIHELKRDLFAARQSSTLLSAALPSAASSSPTTTTVCTPTSELTSGGGETPTALLSGGAKVAERAQAGVVNASCRLATASGSEAATAGPSTAGSSSCPASVVLAAAAAQAAAASQSPPKDMVDLNRRIFVAALNKLE.

Catalysis depends on charge relay system residues His-63, Ser-132, and His-157. Disordered regions lie at residues 270 to 339, 455 to 565, and 593 to 620; these read SAER…MSHP, HPSY…QQQR, and ALPSAASSSPTTTTVCTPTSELTSGGGE. Over residues 284 to 293 the composition is skewed to low complexity; it reads PAAGARVPSS. The span at 294–311 shows a compositional bias: pro residues; it reads SPSPPVEPPSPVQPPALP. Residues 326 to 339 show a composition bias toward low complexity; sequence SPSEPAEAASMSHP. The segment at 333-352 is interaction with pAP; sequence AASMSHPLSAAVPAATAPPG. Residues 498–513 are compositionally biased toward basic residues; it reads KQHRHGGSGGHNKRRK. 2 consecutive short sequence motifs (nuclear localization signal) follow at residues 510–515 and 537–543; these read KRRKET and RARKRLK. A compositionally biased stretch (low complexity) spans 593–615; it reads ALPSAASSSPTTTTVCTPTSELT. The tract at residues 688 to 708 is interaction with major capsid protein; it reads PPKDMVDLNRRIFVAALNKLE.

This sequence belongs to the herpesviridae capsid scaffolding protein family. Homomultimer. Interacts with major capsid protein. As to quaternary structure, exists in a monomer-dimer equilibrium with the dimer being the active species. Capsid scaffolding protein is cleaved by assemblin after formation of the spherical procapsid. As a result, the capsid obtains its mature, icosahedral shape. Cleavages occur at two or more sites: release (R-site) and maturation (M-site).

It is found in the host cytoplasm. The protein resides in the host nucleus. The catalysed reaction is Cleaves -Ala-|-Ser- and -Ala-|-Ala- bonds in the scaffold protein.. Its function is as follows. Acts as a scaffold protein by binding major capsid protein in the cytoplasm, inducing the nuclear localization of both proteins. Multimerizes in the nucleus such as major capsid protein forms the icosahedral T=16 capsid. Autocatalytic cleavage releases the assembly protein, and subsequently abolishes interaction with major capsid protein. Cleavages products are evicted from the capsid before or during DNA packaging. In terms of biological role, protease that plays an essential role in virion assembly within the nucleus. Catalyzes the cleavage of the assembly protein after formation of the spherical procapsid. By that cleavage, the capsid matures and gains its icosahedral shape. The cleavage sites seem to include -Ala-Ser-, -Ala-Ala-, as well as Ala-Thr bonds. Assemblin and cleavages products are evicted from the capsid before or during DNA packaging. Plays a major role in capsid assembly. Acts as a scaffold protein by binding major capsid protein. Multimerizes in the nucleus such as major capsid protein forms the icosahedral T=16 capsid. Cleaved by assemblin after capsid completion. The cleavages products are evicted from the capsid before or during DNA packaging. The chain is Capsid scaffolding protein (UL80) from Homo sapiens (Human).